Reading from the N-terminus, the 350-residue chain is Protein RecA (350 aa).

An ATP-binding site is contributed by 65–72 (GPESSGKT). Residues 329 to 350 (ASPDVKANPVKETEDDMADADI) are disordered. Residues 341–350 (TEDDMADADI) are compositionally biased toward acidic residues.

This sequence belongs to the RecA family.

Its subcellular location is the cytoplasm. In terms of biological role, can catalyze the hydrolysis of ATP in the presence of single-stranded DNA, the ATP-dependent uptake of single-stranded DNA by duplex DNA, and the ATP-dependent hybridization of homologous single-stranded DNAs. It interacts with LexA causing its activation and leading to its autocatalytic cleavage. This chain is Protein RecA, found in Pseudomonas fluorescens (strain ATCC BAA-477 / NRRL B-23932 / Pf-5).